The following is a 328-amino-acid chain: Putative GDP-L-fucose synthase 2 (328 aa).

Position 2 is an N-acetylalanine (Ala-2). Residue 26-32 (GHRGLVG) participates in NADP(+) binding. Catalysis depends on Tyr-152, which acts as the Proton donor/acceptor. Residues Lys-156, 179 to 182 (PTNL), and His-195 contribute to the NADP(+) site. Substrate is bound by residues Arg-203, Trp-218, Arg-225, and Asp-285.

This sequence belongs to the NAD(P)-dependent epimerase/dehydratase family. Fucose synthase subfamily. In terms of assembly, homodimer.

It catalyses the reaction GDP-beta-L-fucose + NADP(+) = GDP-4-dehydro-alpha-D-rhamnose + NADPH + H(+). It functions in the pathway nucleotide-sugar biosynthesis; GDP-L-fucose biosynthesis via de novo pathway; GDP-L-fucose from GDP-alpha-D-mannose: step 2/2. In terms of biological role, catalyzes the two-step NADP-dependent conversion of GDP-4-dehydro-6-deoxy-D-mannose to GDP-fucose, involving an epimerase and a reductase reaction. The sequence is that of Putative GDP-L-fucose synthase 2 (GER2) from Arabidopsis thaliana (Mouse-ear cress).